The chain runs to 62 residues: Large ribosomal subunit protein uL29 (62 aa).

It belongs to the universal ribosomal protein uL29 family.

This chain is Large ribosomal subunit protein uL29, found in Desulfatibacillum aliphaticivorans.